We begin with the raw amino-acid sequence, 128 residues long: Disintegrin ocellatusin (128 aa).

The signal sequence occupies residues 1–20 (MIPVLLVTICLAVFPFQGSS). The propeptide occupies 21–65 (IILESGNINDYEIVYPKKVAVLPTGAMNSAHPCYDPVTCQPKEKE). A Disintegrin domain is found at 26 to 112 (GNINDYEIVY…DCPRNPYKGE (87 aa)). Disulfide bonds link C53/C59, C67/C76, C72/C97, C73/C102, and C85/C104. Residues 89 to 91 (RGD) carry the Cell attachment site motif. Residues 116–128 (MEWPAPAKGSVLM) constitute a propeptide that is removed on maturation.

As to quaternary structure, monomer. Expressed by the venom gland.

Its subcellular location is the secreted. Functionally, the disintegrin ocellatusin-10c1 is a poor inhibitor of platelet aggregation. The disintegrin inhibits the adhesion of cells expressing the RGD-dependent integrin alpha-5/beta-1 (ITGA5/ITGB1) to immobilized fibronectin. Inhibition on alpha-2b/beta-3 (ITGA2B/ITGB3) is low, and there is no inhibition on alpha-1/beta-1 (ITGA1/ITGB1), alpha-2/beta-1 (ITGA2/ITGB1) and alpha-6/beta-1 (ITGA6/ITGB1). The short monomeric disintegrin ocellatusin inhibits ADP-induced platelet aggregation (IC(50)=168 nM). Inhibits alpha-5/beta-1 (ITGA5/ITGB1) integrin and induces the expression of a ligand-induced binding site epitope on beta-1 integrin subunit. Has a direct chemotactic stimulus on human neutrophils in vitro. The protein is Disintegrin ocellatusin of Echis ocellatus (Ocellated saw-scaled viper).